The primary structure comprises 116 residues: Large ribosomal subunit protein uL18 (116 aa).

Belongs to the universal ribosomal protein uL18 family. Part of the 50S ribosomal subunit; part of the 5S rRNA/L5/L18/L25 subcomplex. Contacts the 5S and 23S rRNAs.

Its function is as follows. This is one of the proteins that bind and probably mediate the attachment of the 5S RNA into the large ribosomal subunit, where it forms part of the central protuberance. The sequence is that of Large ribosomal subunit protein uL18 from Alcanivorax borkumensis (strain ATCC 700651 / DSM 11573 / NCIMB 13689 / SK2).